The primary structure comprises 635 residues: Sodium- and chloride-dependent creatine transporter 1 (635 aa).

A disordered region spans residues 1-27 (MAKKSAENGIYSVSGDEKKGPLIVSGP). Residues 1–60 (MAKKSAENGIYSVSGDEKKGPLIVSGPDGAPAKGDGPAGLGAPGGRLAVPPRETWTRQMD) lie on the Cytoplasmic side of the membrane. A helical transmembrane segment spans residues 61 to 81 (FIMSCVGFAVGLGNVWRFPYL). Residues 82 to 87 (CYKNGG) lie on the Extracellular side of the membrane. A helical transmembrane segment spans residues 88–108 (GVFLIPYVLIALVGGIPIFFL). Over 109-138 (EISLGQFMKAGSINVWNICPLFKGLGYASM) the chain is Cytoplasmic. Residues 139-159 (VIVFYCNTYYIMVLAWGFYYL) traverse the membrane as a helical segment. Topologically, residues 160–230 (VKSFTTTLPW…LSTGLEVPGA (71 aa)) are extracellular. N-linked (GlcNAc...) asparagine glycans are attached at residues asparagine 192 and asparagine 197. A helical transmembrane segment spans residues 231-251 (LNWEVTLCLLACWVLVYFCVW). The Cytoplasmic portion of the chain corresponds to 252–269 (KGVKSTGKIVYFTATFPY). Residues 270-290 (VVLVVLLVRGVLLPGALDGII) traverse the membrane as a helical segment. At 291–304 (YYLKPDWSKLGSPQ) the chain is on the extracellular side. Residues 305-325 (VWIDAGTQIFFSYAIGLGALT) form a helical membrane-spanning segment. Residues 326–341 (ALGSYNRFNNNCYKDA) are Cytoplasmic-facing. The helical transmembrane segment at 342 to 362 (IILALINSGTSFFAGFVVFSI) threads the bilayer. Residues 363–394 (LGFMATEQGVHISKVAESGPGLAFIAYPRAVT) lie on the Extracellular side of the membrane. A helical transmembrane segment spans residues 395–415 (LMPVAPLWAALFFFMLLLLGL). The Cytoplasmic portion of the chain corresponds to 416-444 (DSQFVGVEGFITGLLDLLPASYYFRFQRE). The helical transmembrane segment at 445-465 (ISVALCCALCFVIDLSMVTDG) threads the bilayer. Over 466–479 (GMYVFQLFDYYSAS) the chain is Extracellular. A helical membrane pass occupies residues 480–500 (GTTLLWQAFWECVVVAWVYGA). The Cytoplasmic segment spans residues 501–520 (DRFMDDIACMIGYRPCPWMK). Residues 521–541 (WCWSFFTPLVCMGIFIFNIVY) traverse the membrane as a helical segment. Over 542-560 (YEPLVYNNTYVYPWWGEAM) the chain is Extracellular. Asparagine 548 carries N-linked (GlcNAc...) asparagine glycosylation. The helical transmembrane segment at 561–581 (GWAFALSSMLCVPLHLLGCLL) threads the bilayer. At 582-635 (RAKGTMAERWQHLTQPIWGLHHLEYRAQDADVRGLTTLTPVSESSKVVVVESVM) the chain is on the cytoplasmic side. Phosphothreonine is present on residues threonine 617 and threonine 620. Serine 623 carries the post-translational modification Phosphoserine.

Belongs to the sodium:neurotransmitter symporter (SNF) (TC 2.A.22) family. SLC6A8 subfamily. Post-translationally, glycosylated. Brain. Highly expressed in brain capillaries branching in all cortical layers and moderately expressed in neuronal perikarya (at protein level).

The protein resides in the cell membrane. Its subcellular location is the apical cell membrane. It carries out the reaction creatine(out) + chloride(out) + 2 Na(+)(out) = creatine(in) + chloride(in) + 2 Na(+)(in). Creatine:sodium symporter which mediates the uptake of creatine. Plays an important role in supplying creatine to the brain via the blood-brain barrier. In Mus musculus (Mouse), this protein is Sodium- and chloride-dependent creatine transporter 1 (Slc6a8).